Reading from the N-terminus, the 562-residue chain is Gut esterase 1 (562 aa).

Residues 1–16 form the signal peptide; that stretch reads MRIFLVSVILINACWA. N73 is a glycosylation site (N-linked (GlcNAc...) asparagine; atypical). A disulfide bridge links C75 with C93. The active-site Acyl-ester intermediate is the S198. C250 and C258 are joined by a disulfide. Residues E319 and H452 each act as charge relay system in the active site. Positions 559–562 match the Prevents secretion from ER motif; sequence KDEL.

The protein belongs to the type-B carboxylesterase/lipase family. Expressed only in the intestine.

It localises to the endoplasmic reticulum lumen. The enzyme catalyses a carboxylic ester + H2O = an alcohol + a carboxylate + H(+). The sequence is that of Gut esterase 1 (ges-1) from Caenorhabditis elegans.